Reading from the N-terminus, the 49-residue chain is Astexin-2 (49 aa).

The propeptide occupies 1–25; that stretch reads MTKRTTIAARRVGLIDLGKATRQTK. The isoaspartyl glycine isopeptide (Gly-Asp) cross-link spans 26–34; the sequence is GLTQIQALD.

Post-translationally, this lasso peptide is hydrolyzed to a linear form by the isopeptidase AtxE2, in vitro. The isopeptidase AtxE2 only recognizes the threaded form (but not the unthreaded form).

The protein resides in the cytoplasm. It is found in the secreted. Functionally, shows weak antimicrobial activity against its phylogenetic relative Caulobacter crescentus. Does not show activity against other bacteria tested (E.coli, Vibrio sp, Burkhoderia thailandensis, and Salmonella newport). This chain is Astexin-2, found in Asticcacaulis excentricus (strain ATCC 15261 / DSM 4724 / KCTC 12464 / NCIMB 9791 / VKM B-1370 / CB 48).